A 180-amino-acid polypeptide reads, in one-letter code: uncharacterized protein (180 aa).

Positions 1 to 30 are cleaved as a signal peptide; that stretch reads MRHKIITFILAVVVIIIIGNMIGGGGGSEA. The tract at residues 25 to 46 is disordered; sequence GGGSEATSKTSSSSKAETEKTY. Residues 29–39 are compositionally biased toward low complexity; that stretch reads EATSKTSSSSK.

The protein resides in the secreted. This is an uncharacterized protein from Bacillus subtilis (strain 168).